Reading from the N-terminus, the 216-residue chain is 3-isopropylmalate dehydratase small subunit (216 aa).

It belongs to the LeuD family. LeuD type 1 subfamily. In terms of assembly, heterodimer of LeuC and LeuD.

It catalyses the reaction (2R,3S)-3-isopropylmalate = (2S)-2-isopropylmalate. It functions in the pathway amino-acid biosynthesis; L-leucine biosynthesis; L-leucine from 3-methyl-2-oxobutanoate: step 2/4. Catalyzes the isomerization between 2-isopropylmalate and 3-isopropylmalate, via the formation of 2-isopropylmaleate. The sequence is that of 3-isopropylmalate dehydratase small subunit from Polaromonas naphthalenivorans (strain CJ2).